Reading from the N-terminus, the 161-residue chain is Pleiotrophin-B (161 aa).

Positions 1–23 are cleaved as a signal peptide; it reads MHHQHGLFMLALLAFLLVMTVLG. 5 disulfide bridges follow: cysteine 41–cysteine 70, cysteine 49–cysteine 79, cysteine 56–cysteine 83, cysteine 93–cysteine 125, and cysteine 103–cysteine 135. Chondroitin sulfate binding stretches follow at residues 86–93 and 117–125; these read KKQFGAEC and KRALHNAEC. The interval 136–161 is disordered; that stretch reads GKVTKPKLQESKKKKKEGKNKEKLLD. A chondroitin sulfate A binding region spans residues 141 to 161; that stretch reads PKLQESKKKKKEGKNKEKLLD.

The protein belongs to the pleiotrophin family. In terms of tissue distribution, expressed in high levels in brain and eye. Lower levels in bone. In the tailbud embryo stage, it is expressed exclusively in the central nervous system, especially in the hind region of the brain.

The protein resides in the secreted. Secreted growth factor that mediates its signal through cell-surface proteoglycan and non-proteoglycan receptors. Binds cell-surface proteoglycan receptor via their chondroitin sulfate (CS) groups. Thereby regulates many processes like cell proliferation, cell survival, cell growth, cell differentiation and cell migration. Has antibacterial activity against both Gram-positive and Gram-negative bacteria. This chain is Pleiotrophin-B (ptn-b), found in Xenopus laevis (African clawed frog).